We begin with the raw amino-acid sequence, 408 residues long: Peptidase T (408 aa).

Histidine 78 provides a ligand contact to Zn(2+). Aspartate 80 is an active-site residue. Aspartate 141 contributes to the Zn(2+) binding site. The Proton acceptor role is filled by glutamate 175. The Zn(2+) site is built by glutamate 176, aspartate 198, and histidine 380.

The protein belongs to the peptidase M20B family. Requires Zn(2+) as cofactor.

It localises to the cytoplasm. It catalyses the reaction Release of the N-terminal residue from a tripeptide.. Functionally, cleaves the N-terminal amino acid of tripeptides. This Clostridium botulinum (strain Langeland / NCTC 10281 / Type F) protein is Peptidase T.